The following is a 308-amino-acid chain: Elongation factor Ts (308 aa).

An involved in Mg(2+) ion dislocation from EF-Tu region spans residues 80–83 (TDFV).

The protein belongs to the EF-Ts family.

Its subcellular location is the cytoplasm. Associates with the EF-Tu.GDP complex and induces the exchange of GDP to GTP. It remains bound to the aminoacyl-tRNA.EF-Tu.GTP complex up to the GTP hydrolysis stage on the ribosome. This is Elongation factor Ts from Parvibaculum lavamentivorans (strain DS-1 / DSM 13023 / NCIMB 13966).